We begin with the raw amino-acid sequence, 204 residues long: Methylthioribulose-1-phosphate dehydratase (204 aa).

Residues His-94 and His-96 each contribute to the Zn(2+) site.

This sequence belongs to the aldolase class II family. MtnB subfamily. The cofactor is Zn(2+).

The catalysed reaction is 5-(methylsulfanyl)-D-ribulose 1-phosphate = 5-methylsulfanyl-2,3-dioxopentyl phosphate + H2O. It functions in the pathway amino-acid biosynthesis; L-methionine biosynthesis via salvage pathway; L-methionine from S-methyl-5-thio-alpha-D-ribose 1-phosphate: step 2/6. Catalyzes the dehydration of methylthioribulose-1-phosphate (MTRu-1-P) into 2,3-diketo-5-methylthiopentyl-1-phosphate (DK-MTP-1-P). The chain is Methylthioribulose-1-phosphate dehydratase from Citrobacter koseri (strain ATCC BAA-895 / CDC 4225-83 / SGSC4696).